A 681-amino-acid polypeptide reads, in one-letter code: Methionine--tRNA ligase (681 aa).

The 'HIGH' region motif lies at 14 to 24; the sequence is PYANGSIHLGH. The Zn(2+) site is built by C145, C148, C158, and C161. Positions 331 to 335 match the 'KMSKS' region motif; sequence KMSKS. K334 contributes to the ATP binding site. Residues 579–681 form the tRNA-binding domain; that stretch reads AFAAIDLRVA…SGAKPGQRIK (103 aa).

It belongs to the class-I aminoacyl-tRNA synthetase family. MetG type 1 subfamily. Homodimer. Zn(2+) is required as a cofactor.

The protein localises to the cytoplasm. The enzyme catalyses tRNA(Met) + L-methionine + ATP = L-methionyl-tRNA(Met) + AMP + diphosphate. Is required not only for elongation of protein synthesis but also for the initiation of all mRNA translation through initiator tRNA(fMet) aminoacylation. The polypeptide is Methionine--tRNA ligase (Pseudomonas fluorescens (strain ATCC BAA-477 / NRRL B-23932 / Pf-5)).